The following is a 1166-amino-acid chain: Poly [ADP-ribose] polymerase tankyrase-2 (1166 aa).

ANK repeat units follow at residues 57 to 89 (RKST…ARDD), 90 to 122 (GGLI…ARDN), and 123 to 155 (WNYT…IRNT). Asparagine 203 bears the (3S)-3-hydroxyasparagine; by HIF1AN; partial mark. ANK repeat units lie at residues 210 to 242 (RKST…AKDK), 243 to 275 (GDLV…AMDL), 276 to 308 (WQFT…LLNC), 363 to 398 (THET…EKTK), 399 to 431 (EFLT…ALDN), and 432 to 464 (LGQT…IISL). Histidine 238 carries the post-translational modification (3S)-3-hydroxyhistidine; by HIF1AN; partial. Asparagine 271 is subject to (3S)-3-hydroxyasparagine; by HIF1AN; partial. Position 427 is a (3S)-3-hydroxyasparagine; by HIF1AN; partial (asparagine 427). Asparagine 518 is modified ((3S)-3-hydroxyasparagine; by HIF1AN; partial). 3 ANK repeats span residues 525–557 (RQST…AKDK), 558–590 (GGLV…VADL), and 591–623 (WKFT…KKNR). Residues 545-553 (LLQHGADVH) form an HIF1AN-binding region. Histidine 553 carries the post-translational modification (3S)-3-hydroxyhistidine; by HIF1AN; partial. Asparagine 586 bears the (3S)-3-hydroxyasparagine; by HIF1AN; partial mark. A (3S)-3-hydroxyasparagine; by HIF1AN; partial mark is found at asparagine 671, asparagine 706, and asparagine 739. 3 ANK repeats span residues 678–710 (RHST…AQDK), 711–743 (GGLI…ATDK), and 744–776 (WAFT…LKNQ). The segment at 819 to 839 (GATADALSSGPSSPSSLSAAS) is disordered. The span at 822 to 839 (ADALSSGPSSPSSLSAAS) shows a compositional bias: low complexity. One can recognise an SAM domain in the interval 873–936 (GVDFSITQFV…IKGVERLISG (64 aa)). The PARP catalytic domain occupies 959 to 1164 (SPDDKEFQSV…YQIMRPEGMV (206 aa)). Zn(2+) is bound by residues cysteine 1081, histidine 1084, cysteine 1089, and cysteine 1092.

This sequence belongs to the ARTD/PARP family. As to quaternary structure, oligomerizes and associates with TNKS. Interacts with the cytoplasmic domain of LNPEP/Otase in SLC2A4/GLUT4-vesicles. Binds to the N-terminus of Grb14 and TRF1 with its ankyrin repeat region. Interacts with HIF1AN. Interacts with RNF146; this interaction leads to ubiquitination and proteasomal degradation. Interacts with NUMA1. In terms of processing, ubiquitinated at 'Lys-48' and 'Lys-63' by RNF146 when auto-poly-ADP-ribosylated; this leads to degradation. Deubiquitinated by USP25; leading to stabilization. Post-translationally, ADP-ribosylated (-auto). Poly-ADP-ribosylated protein is recognized by RNF146, followed by ubiquitination. The crystallographic evidence suggests that the 3-hydroxyhistidine may be the (3S) stereoisomer. Highly expressed in placenta, skeletal muscle, liver, brain, kidney, heart, thymus, spinal cord, lung, peripheral blood leukocytes, pancreas, lymph nodes, spleen, prostate, testis, ovary, small intestine, colon, mammary gland, breast and breast carcinoma, and in common-type meningioma. Highly expressed in fetal liver, heart and brain.

It is found in the cytoplasm. The protein resides in the golgi apparatus membrane. The protein localises to the nucleus. Its subcellular location is the chromosome. It localises to the telomere. The catalysed reaction is NAD(+) + (ADP-D-ribosyl)n-acceptor = nicotinamide + (ADP-D-ribosyl)n+1-acceptor + H(+).. It carries out the reaction L-aspartyl-[protein] + NAD(+) = 4-O-(ADP-D-ribosyl)-L-aspartyl-[protein] + nicotinamide. The enzyme catalyses L-glutamyl-[protein] + NAD(+) = 5-O-(ADP-D-ribosyl)-L-glutamyl-[protein] + nicotinamide. With respect to regulation, specifically inhibited by XAV939, a small molecule, leading to inhibit the Wnt signaling pathway by stabilizing AXIN1 and AXIN2. Inhibited by talazoparib. In terms of biological role, poly-ADP-ribosyltransferase involved in various processes such as Wnt signaling pathway, telomere length and vesicle trafficking. Acts as an activator of the Wnt signaling pathway by mediating poly-ADP-ribosylation of AXIN1 and AXIN2, 2 key components of the beta-catenin destruction complex: poly-ADP-ribosylated target proteins are recognized by RNF146, which mediates their ubiquitination and subsequent degradation. Also mediates poly-ADP-ribosylation of BLZF1 and CASC3, followed by recruitment of RNF146 and subsequent ubiquitination. Mediates poly-ADP-ribosylation of TERF1, thereby contributing to the regulation of telomere length. Stimulates 26S proteasome activity. The chain is Poly [ADP-ribose] polymerase tankyrase-2 from Homo sapiens (Human).